A 349-amino-acid chain; its full sequence is Quinone oxidoreductase-like protein 2 (349 aa).

At Lys-35 the chain carries N6-acetyllysine. Position 200 is an N6-succinyllysine (Lys-200).

This sequence belongs to the zinc-containing alcohol dehydrogenase family. Quinone oxidoreductase subfamily.

The chain is Quinone oxidoreductase-like protein 2 from Bos taurus (Bovine).